Reading from the N-terminus, the 21-residue chain is Fibrinogen beta chain (21 aa).

At Gln1 the chain carries Pyrrolidone carboxylic acid. Tyr6 carries the sulfotyrosine modification.

As to quaternary structure, heterohexamer; disulfide linked. Contains 2 sets of 3 non-identical chains (alpha, beta and gamma). The 2 heterotrimers are in head to head conformation with the N-termini in a small central domain. Conversion of fibrinogen to fibrin is triggered by thrombin, which cleaves fibrinopeptides A and B from alpha and beta chains, and thus exposes the N-terminal polymerization sites responsible for the formation of the soft clot.

It is found in the secreted. In terms of biological role, cleaved by the protease thrombin to yield monomers which, together with fibrinogen alpha (FGA) and fibrinogen gamma (FGG), polymerize to form an insoluble fibrin matrix. Fibrin has a major function in hemostasis as one of the primary components of blood clots. In addition, functions during the early stages of wound repair to stabilize the lesion and guide cell migration during re-epithelialization. Was originally thought to be essential for platelet aggregation, based on in vitro studies using anticoagulated blood. However subsequent studies have shown that it is not absolutely required for thrombus formation in vivo. Enhances expression of SELP in activated platelets. Maternal fibrinogen is essential for successful pregnancy. Fibrin deposition is also associated with infection, where it protects against IFNG-mediated hemorrhage. May also facilitate the antibacterial immune response via both innate and T-cell mediated pathways. This Odocoileus hemionus (Mule deer) protein is Fibrinogen beta chain (FGB).